A 369-amino-acid polypeptide reads, in one-letter code: Trans-enoyl reductase pyiC (369 aa).

Residue Cys-52–Lys-55 coordinates NADP(+). Residue Thr-137–Met-144 coordinates substrate. NADP(+) is bound by residues Ser-195–Asn-198, Tyr-213, and Leu-260–Glu-261. Gly-280–Leu-284 is a substrate binding site. Val-349 to Ser-350 is an NADP(+) binding site.

It belongs to the zinc-containing alcohol dehydrogenase family. In terms of assembly, monomer.

Its pathway is mycotoxin biosynthesis. In terms of biological role, trans-enoyl reductase; part of the gene cluster that mediates the biosynthesis of the mycotoxin pyrichalasin H, a tyrosine-derived cytochalasan that inhibits the growth of rice seedlings, but also inhibits lymphocyte capping and actin polymerization and alters cell morphology. Pyrichalasin H is indicated as the responsible agent for the genus-specific pathogenicity of M.grisea toward crabgrass. The first step in the pathway is catalyzed by the O-methyltransferase pyiA which methylates free tyrosine to generate the precursor O-methyltyrosine. The hybrid PKS-NRPS pyiS, assisted by the enoyl reductase pyiC, are responsible for fusion of the O-methyltyrosine precursor and the polyketide backbone. The polyketide synthase module (PKS) of pyiS is responsible for the synthesis of the polyketide backbone and the downstream nonribosomal peptide synthetase (NRPS) amidates the carboxyl end of the polyketide with the O-methyltyrosine precursor. As the NRPS A-domain demonstrates substrate tolerance, pyiS can also use phenylalanine, tyrosine and even para-chlorophenylalanine as amino acid precursor, which leads to the production of novel cytochalasans, including halogenated cytochalasans. Because pyiS lacks a designated enoylreductase (ER) domain, the required activity is provided the enoyl reductase pyiC. Reduction by the hydrolyase pyiE, followed by dehydration and intra-molecular Diels-Alder cyclization by the Diels-Alderase pyiF then yield the required isoindolone-fused macrocycle. The tailoring cytochrome P450 monooxygenases piyD and piyG catalyze the hydroxylation at C-18 and C-7, respectivily, whereas the short-chain dehydrogenase/reductase pyiH reduces the carbonyl at C-21 in preparation for the transfer of an acetyl group by the acetyltransferase pyiB. These 3 reactions whose order is not clear yet, lead to the production of O-methylpyrichalasin J, a deacetylated pyrichalasin H. Finally, pyiB to converts O-methylpyrichalasin J into the final product pyrichalasin H via acetylation of C-21. The polypeptide is Trans-enoyl reductase pyiC (Pyricularia grisea (Crabgrass-specific blast fungus)).